The chain runs to 287 residues: Aspartate dehydrogenase domain-containing protein (287 aa).

Phosphoserine is present on residues Ser-24 and Ser-172.

The protein belongs to the L-aspartate dehydrogenase family.

This Mus musculus (Mouse) protein is Aspartate dehydrogenase domain-containing protein.